Reading from the N-terminus, the 686-residue chain is MEIQQRKILVTCALPYANGPIHLGHMLEHVQADIWVRFQRLRGHNIHFICADDAHGTPIMLKAQEMGIKPTDMIADIRASHESDFSGFNISFDNYHSTHSEENQALSSQIYIALRENGYITNRTISQLFDPEKKMFLPDRFVKGTCPDCKADDQYGDNCDACGATYSPTEMINPKSAVSGSTPIMKDTEHFFFDLPQFEDMLKVWTKSGALQTEMANKVGEWFETGLKQWDITRDAPYFGFEIPDAPGKFFYVWLDAPIGYMGSFKNLCDKTEGLNFDDYWKKDSAAELYHFIGKDIVNFHSLFWPAVLEGAGFRKPTAVNVHGYVTVNGAKMSKSKGTFIKASTYLDNLDPECLRYYYAAKLTSRIDDLDLNLEDFTQRVNSDVVNKLVNLASRTAGFITKKYDGQLSNHVSEPQLYQSFIDAGTSIAALFEQRDFARAIREIMALADIANKYIDEKAPWALAKQEGSEVKVQEICSMGINLFRVLMTYLKPIIPKLAARSEDFLAETLDWEIIKKPLAGHRINKFKALFQRIDPKHVEAMVDASKDSLEADKAAKQKQAAAQLDAAKSELDKEPLAPEIDFDTFAKTDLRVALITKAEAVPKANKLLKLTLDLGGETRTVFAGIKSAYTPEELEGRLTVMVANLAPRQMKFGLSEGMVLATGPGGKEIHILNPDDGAKPGQRIM.

The 'HIGH' region motif lies at 15-25 (PYANGPIHLGH). Cys-146, Cys-149, Cys-159, and Cys-162 together coordinate Zn(2+). Positions 332-336 (KMSKS) match the 'KMSKS' region motif. Position 335 (Lys-335) interacts with ATP. One can recognise a tRNA-binding domain in the interval 585 to 686 (TFAKTDLRVA…DGAKPGQRIM (102 aa)).

Belongs to the class-I aminoacyl-tRNA synthetase family. MetG type 1 subfamily. In terms of assembly, homodimer. Zn(2+) is required as a cofactor.

It localises to the cytoplasm. The catalysed reaction is tRNA(Met) + L-methionine + ATP = L-methionyl-tRNA(Met) + AMP + diphosphate. In terms of biological role, is required not only for elongation of protein synthesis but also for the initiation of all mRNA translation through initiator tRNA(fMet) aminoacylation. The sequence is that of Methionine--tRNA ligase from Psychromonas ingrahamii (strain DSM 17664 / CCUG 51855 / 37).